The sequence spans 202 residues: Holliday junction branch migration complex subunit RuvA (202 aa).

Residues 1–64 are domain I; that stretch reads MIGRLRGSLA…EDAHLLYGFY (64 aa). A domain II region spans residues 65 to 143; it reads EKRERELFRE…AWESLPGTFT (79 aa). The segment at 144 to 153 is flexible linker; the sequence is LVSNGPNQAE. Positions 154–202 are domain III; the sequence is PVASAESDAVSALISLGYKPQEASKAVSAIKEKDLSSADLIRRALKGMG.

The protein belongs to the RuvA family. As to quaternary structure, homotetramer. Forms an RuvA(8)-RuvB(12)-Holliday junction (HJ) complex. HJ DNA is sandwiched between 2 RuvA tetramers; dsDNA enters through RuvA and exits via RuvB. An RuvB hexamer assembles on each DNA strand where it exits the tetramer. Each RuvB hexamer is contacted by two RuvA subunits (via domain III) on 2 adjacent RuvB subunits; this complex drives branch migration. In the full resolvosome a probable DNA-RuvA(4)-RuvB(12)-RuvC(2) complex forms which resolves the HJ.

Its subcellular location is the cytoplasm. In terms of biological role, the RuvA-RuvB-RuvC complex processes Holliday junction (HJ) DNA during genetic recombination and DNA repair, while the RuvA-RuvB complex plays an important role in the rescue of blocked DNA replication forks via replication fork reversal (RFR). RuvA specifically binds to HJ cruciform DNA, conferring on it an open structure. The RuvB hexamer acts as an ATP-dependent pump, pulling dsDNA into and through the RuvAB complex. HJ branch migration allows RuvC to scan DNA until it finds its consensus sequence, where it cleaves and resolves the cruciform DNA. This is Holliday junction branch migration complex subunit RuvA from Pseudomonas savastanoi pv. phaseolicola (strain 1448A / Race 6) (Pseudomonas syringae pv. phaseolicola (strain 1448A / Race 6)).